The chain runs to 359 residues: Alanine racemase, biosynthetic (359 aa).

Lys34 (proton acceptor; specific for D-alanine) is an active-site residue. The residue at position 34 (Lys34) is an N6-(pyridoxal phosphate)lysine. Arg129 serves as a coordination point for substrate. The Proton acceptor; specific for L-alanine role is filled by Tyr255. A substrate-binding site is contributed by Met303.

The protein belongs to the alanine racemase family. Requires pyridoxal 5'-phosphate as cofactor.

The catalysed reaction is L-alanine = D-alanine. It participates in amino-acid biosynthesis; D-alanine biosynthesis; D-alanine from L-alanine: step 1/1. It functions in the pathway cell wall biogenesis; peptidoglycan biosynthesis. In terms of biological role, catalyzes the interconversion of L-alanine and D-alanine. Provides the D-alanine required for cell wall biosynthesis. This is Alanine racemase, biosynthetic (alr) from Escherichia coli O157:H7.